Here is a 279-residue protein sequence, read N- to C-terminus: Urease accessory protein UreD (279 aa).

The protein belongs to the UreD family. As to quaternary structure, ureD, UreF and UreG form a complex that acts as a GTP-hydrolysis-dependent molecular chaperone, activating the urease apoprotein by helping to assemble the nickel containing metallocenter of UreC. The UreE protein probably delivers the nickel.

It localises to the cytoplasm. Its function is as follows. Required for maturation of urease via the functional incorporation of the urease nickel metallocenter. The sequence is that of Urease accessory protein UreD from Rhodopseudomonas palustris (strain ATCC BAA-98 / CGA009).